The following is a 72-amino-acid chain: Large ribosomal subunit protein bL31 (72 aa).

4 residues coordinate Zn(2+): C16, C18, C38, and C41.

Belongs to the bacterial ribosomal protein bL31 family. Type A subfamily. In terms of assembly, part of the 50S ribosomal subunit. Zn(2+) serves as cofactor.

Its function is as follows. Binds the 23S rRNA. The polypeptide is Large ribosomal subunit protein bL31 (Francisella tularensis subsp. holarctica (strain LVS)).